The chain runs to 191 residues: Glycerol-3-phosphate acyltransferase (191 aa).

Transmembrane regions (helical) follow at residues Ile7–Gly27, Lys51–Ala71, Phe80–Phe100, Phe115–Phe135, Ser139–Ala159, and Glu161–Val181.

Belongs to the PlsY family. In terms of assembly, probably interacts with PlsX.

The protein localises to the cell inner membrane. It carries out the reaction an acyl phosphate + sn-glycerol 3-phosphate = a 1-acyl-sn-glycero-3-phosphate + phosphate. The protein operates within lipid metabolism; phospholipid metabolism. Its function is as follows. Catalyzes the transfer of an acyl group from acyl-phosphate (acyl-PO(4)) to glycerol-3-phosphate (G3P) to form lysophosphatidic acid (LPA). This enzyme utilizes acyl-phosphate as fatty acyl donor, but not acyl-CoA or acyl-ACP. The chain is Glycerol-3-phosphate acyltransferase from Ehrlichia canis (strain Jake).